Consider the following 252-residue polypeptide: Chitooligosaccharide deacetylase (252 aa).

Residues histidine 61 and histidine 125 each contribute to the Mg(2+) site.

Belongs to the YdjC deacetylase family. ChbG subfamily. As to quaternary structure, homodimer. It depends on Mg(2+) as a cofactor.

It is found in the cytoplasm. The enzyme catalyses N,N'-diacetylchitobiose + H2O = N-acetyl-beta-D-glucosaminyl-(1-&gt;4)-D-glucosamine + acetate. The catalysed reaction is diacetylchitobiose-6'-phosphate + H2O = N'-monoacetylchitobiose-6'-phosphate + acetate. Its pathway is glycan degradation; chitin degradation. Functionally, involved in the degradation of chitin. ChbG is essential for growth on the acetylated chitooligosaccharides chitobiose and chitotriose but is dispensable for growth on cellobiose and chitosan dimer, the deacetylated form of chitobiose. Deacetylation of chitobiose-6-P and chitotriose-6-P is necessary for both the activation of the chb promoter by the regulatory protein ChbR and the hydrolysis of phosphorylated beta-glucosides by the phospho-beta-glucosidase ChbF. Catalyzes the removal of only one acetyl group from chitobiose-6-P to yield monoacetylchitobiose-6-P, the inducer of ChbR and the substrate of ChbF. The polypeptide is Chitooligosaccharide deacetylase (Escherichia coli O8 (strain IAI1)).